The sequence spans 423 residues: MSLNAFITETTIQGAADGPLDGTTVAVKDNISTKGVPTTCGSKMLADYEPPYNATVVEDLLAAGGTIVGKTNMDEFGMGTTTETSYFGPTKNPVDETRVPGGSSGGSAAAVANGDADLALGSDTGGSVRAPAAYCGVVGLKPTYGLVSRYGLVAYANSLEQIGPIAPTVEGAAELLDVIAGPDEHDGTTRDAGADADYASAATGDVDGLTIGVPQELTDGADDRVVERFEAALADLRAEGATTVDVALPSCEYAVAAYYVIAMSEASSNLARFDGVRYGTGGGFDGNWNETFADARADGFGDEVTRRILLGTYALSAGYHDKYYKQAQEARAWVKQDFDETFADVDVVASPTMPVLPPKLGESLDDPVQMYLADANTTPANLANLPAISVPAGDADGLPVGVQLVGPKFGEETIINAAAAVEQ.

Active-site charge relay system residues include Lys28 and Ser103. The active-site Acyl-ester intermediate is Ser127.

It belongs to the amidase family. GatA subfamily. In terms of assembly, heterotrimer of A, B and C subunits.

The enzyme catalyses L-glutamyl-tRNA(Gln) + L-glutamine + ATP + H2O = L-glutaminyl-tRNA(Gln) + L-glutamate + ADP + phosphate + H(+). Functionally, allows the formation of correctly charged Gln-tRNA(Gln) through the transamidation of misacylated Glu-tRNA(Gln) in organisms which lack glutaminyl-tRNA synthetase. The reaction takes place in the presence of glutamine and ATP through an activated gamma-phospho-Glu-tRNA(Gln). This chain is Glutamyl-tRNA(Gln) amidotransferase subunit A, found in Halobacterium salinarum (strain ATCC 700922 / JCM 11081 / NRC-1) (Halobacterium halobium).